Reading from the N-terminus, the 116-residue chain is Ribonuclease P protein component (116 aa).

The protein belongs to the RnpA family. As to quaternary structure, consists of a catalytic RNA component (M1 or rnpB) and a protein subunit.

The catalysed reaction is Endonucleolytic cleavage of RNA, removing 5'-extranucleotides from tRNA precursor.. In terms of biological role, RNaseP catalyzes the removal of the 5'-leader sequence from pre-tRNA to produce the mature 5'-terminus. It can also cleave other RNA substrates such as 4.5S RNA. The protein component plays an auxiliary but essential role in vivo by binding to the 5'-leader sequence and broadening the substrate specificity of the ribozyme. The protein is Ribonuclease P protein component of Thermoanaerobacter pseudethanolicus (strain ATCC 33223 / 39E) (Clostridium thermohydrosulfuricum).